The sequence spans 487 residues: 2-aminomuconic semialdehyde dehydrogenase (487 aa).

An NAD(+)-binding site is contributed by 231–236 (GSQPTA). The Proton acceptor role is filled by Glu253. Residue Cys287 is the Nucleophile of the active site. Residue Ser362 is modified to Phosphoserine.

This sequence belongs to the aldehyde dehydrogenase family. Detected in hepatocytes and in proximal and distal convoluted tubules in kidney cortex (at protein level). Highly expressed in adult liver and in kidney cortex. First detected in embryonic liver after 15 days of development.

The protein resides in the cytoplasm. The catalysed reaction is 2-aminomuconate 6-semialdehyde + NAD(+) + H2O = (2Z,4E)-2-aminomuconate + NADH + 2 H(+). It functions in the pathway amino-acid degradation; L-kynurenine degradation. Catalyzes the NAD-dependent oxidation of 2-aminomuconic semialdehyde of the kynurenine metabolic pathway in L-tryptophan degradation. This Mus musculus (Mouse) protein is 2-aminomuconic semialdehyde dehydrogenase (Aldh8a1).